A 457-amino-acid chain; its full sequence is ATP-dependent protease ATPase subunit HslU (457 aa).

Residues Ile-18 and 60-65 each bind ATP; that span reads GVGKTE. The segment at 142-171 is disordered; it reads KQPGMGFFNPAAPEEQEEQPSADQSSTREK. Residues Asp-269, Glu-335, and Arg-407 each coordinate ATP.

Belongs to the ClpX chaperone family. HslU subfamily. As to quaternary structure, a double ring-shaped homohexamer of HslV is capped on each side by a ring-shaped HslU homohexamer. The assembly of the HslU/HslV complex is dependent on binding of ATP.

The protein localises to the cytoplasm. Functionally, ATPase subunit of a proteasome-like degradation complex; this subunit has chaperone activity. The binding of ATP and its subsequent hydrolysis by HslU are essential for unfolding of protein substrates subsequently hydrolyzed by HslV. HslU recognizes the N-terminal part of its protein substrates and unfolds these before they are guided to HslV for hydrolysis. In Maridesulfovibrio salexigens (strain ATCC 14822 / DSM 2638 / NCIMB 8403 / VKM B-1763) (Desulfovibrio salexigens), this protein is ATP-dependent protease ATPase subunit HslU.